Consider the following 543-residue polypeptide: Sodium-dependent lysophosphatidylcholine symporter 1 (543 aa).

The segment covering 1–14 (MAKGEGAESGSAAG) has biased composition (low complexity). Residues 1 to 34 (MAKGEGAESGSAAGLLPTSILQSTERPAQVKKEP) form a disordered region. Residues 1–40 (MAKGEGAESGSAAGLLPTSILQSTERPAQVKKEPKKKKQQ) lie on the Cytoplasmic side of the membrane. Residues 41–70 (LSVCNKLCYALGGAPYQVTGCALGFFLQIY) form a helical membrane-spanning segment. Residues 71–94 (LLDVAQKDEEVVFCFSSFQVGPFS) lie on the Extracellular side of the membrane. A helical membrane pass occupies residues 95–115 (ASIILFVGRAWDAITDPLVGL). The Cytoplasmic segment spans residues 116–127 (CISKSPWTCLGR). Residues 128–147 (LMPWIIFSTPLAVIAYFLIW) traverse the membrane as a helical segment. Topologically, residues 148-157 (FVPDFPHGQT) are extracellular. A helical transmembrane segment spans residues 158–182 (YWYLLFYCLFETMVTCFHVPYSALT). Topologically, residues 183-189 (MFISTEQ) are cytoplasmic. Residues 190–221 (TERDSATAYRMTVEVLGTVLGTAIQGQIVGQA) traverse the membrane as a helical segment. The Extracellular portion of the chain corresponds to 222–241 (DTPCFQDLNSSTVASQSANH). The cysteines at positions 225 and 473 are disulfide-linked. N-linked (GlcNAc...) asparagine glycans are attached at residues Asn230 and Asn240. Residues 242–275 (THGTTSHRETQKAYLLAAGVIVCIYIICAVILIL) traverse the membrane as a helical segment. Topologically, residues 276-306 (GVREQREPYEAQQSEPIAYFRGLRLVMSHGP) are cytoplasmic. The helical transmembrane segment at 307-333 (YIKLITGFLFTSLAFMLVEGNFVLFCT) threads the bilayer. Topologically, residues 334–344 (YTLGFRNEFQN) are extracellular. Residues 345–363 (LLLAIMLSATLTIPIWQWF) form a helical membrane-spanning segment. The Cytoplasmic segment spans residues 364–367 (LTRF). The chain crosses the membrane as a helical span at residues 368–389 (GKKTAVYVGISSAVPFLILVAL). Residues 390–392 (MES) are Extracellular-facing. The chain crosses the membrane as a helical span at residues 393 to 429 (NLIITYAVAVAAGISVAAAFLLPWSMLPDVIDDFHLK). Residues 430–439 (QPHFHGTEPI) are Cytoplasmic-facing. Residues 440–466 (FFSFYVFFTKFASGVSLGISTLSLDFA) traverse the membrane as a helical segment. Topologically, residues 467–478 (GYQTRGCSQPER) are extracellular. A helical membrane pass occupies residues 479 to 502 (VKFTLNMLVTMAPIVLILLGLLLF). Residues 503-543 (KMYPIDEERRRQNKKALQALRDEASSSGCSETDSTELASIL) are Cytoplasmic-facing.

Belongs to the major facilitator superfamily. In terms of assembly, interacts with ERVFRD-1/syncytin-2. In placenta, associated with trophoblast cells.

The protein resides in the cell membrane. The protein localises to the endoplasmic reticulum membrane. It carries out the reaction a 1-acyl-sn-glycero-3-phosphocholine(in) + Na(+)(in) = a 1-acyl-sn-glycero-3-phosphocholine(out) + Na(+)(out). It catalyses the reaction 1-(4Z,7Z,10Z,13Z,16Z,19Z-docosahexaenoyl)-sn-glycero-3-phosphocholine(in) + Na(+)(in) = 1-(4Z,7Z,10Z,13Z,16Z,19Z-docosahexaenoyl)-sn-glycero-3-phosphocholine(out) + Na(+)(out). The enzyme catalyses 1-(9Z-octadecenoyl)-sn-glycero-3-phosphocholine(in) + Na(+)(in) = 1-(9Z-octadecenoyl)-sn-glycero-3-phosphocholine(out) + Na(+)(out). The catalysed reaction is 1-hexadecanoyl-sn-glycero-3-phosphocholine(in) + Na(+)(in) = 1-hexadecanoyl-sn-glycero-3-phosphocholine(out) + Na(+)(out). It carries out the reaction a 1-acyl-sn-glycero-3-phosphoethanolamine(in) + Na(+)(in) = a 1-acyl-sn-glycero-3-phosphoethanolamine(out) + Na(+)(out). In terms of biological role, sodium-dependent lysophosphatidylcholine (LPC) symporter, which plays an essential role for blood-brain barrier formation and function. Specifically expressed in endothelium of the blood-brain barrier of micro-vessels and transports LPC into the brain. Transport of LPC is essential because it constitutes the major mechanism by which docosahexaenoic acid (DHA), an omega-3 fatty acid that is essential for normal brain growth and cognitive function, enters the brain. Transports LPC carrying long-chain fatty acids such LPC oleate and LPC palmitate with a minimum acyl chain length of 14 carbons. Does not transport docosahexaenoic acid in unesterified fatty acid. Specifically required for blood-brain barrier formation and function, probably by mediating lipid transport. Not required for central nervous system vascular morphogenesis. Acts as a transporter for tunicamycin, an inhibitor of asparagine-linked glycosylation. In placenta, acts as a receptor for ERVFRD-1/syncytin-2 and is required for trophoblast fusion. The sequence is that of Sodium-dependent lysophosphatidylcholine symporter 1 from Homo sapiens (Human).